Here is a 194-residue protein sequence, read N- to C-terminus: Fe/S biogenesis protein NfuA (194 aa).

Residues Cys152 and Cys155 each coordinate [4Fe-4S] cluster.

This sequence belongs to the NfuA family. As to quaternary structure, homodimer. Requires [4Fe-4S] cluster as cofactor.

Involved in iron-sulfur cluster biogenesis. Binds a 4Fe-4S cluster, can transfer this cluster to apoproteins, and thereby intervenes in the maturation of Fe/S proteins. Could also act as a scaffold/chaperone for damaged Fe/S proteins. The polypeptide is Fe/S biogenesis protein NfuA (Pseudomonas entomophila (strain L48)).